The chain runs to 86 residues: Acyl-CoA-binding protein homolog 1 (86 aa).

Positions 1-86 (MTLSFDDAAA…VEELIAKYGA (86 aa)) constitute an ACB domain. An acyl-CoA contacts are provided by residues K13, 28-32 (YALFK), K50, K54, and Y73.

The protein belongs to the ACBP family.

In terms of biological role, binds medium- and long-chain acyl-CoA esters with very high affinity and may function as an intracellular carrier of acyl-CoA esters. The chain is Acyl-CoA-binding protein homolog 1 (acbp-1) from Caenorhabditis elegans.